A 408-amino-acid chain; its full sequence is Argininosuccinate synthase (408 aa).

8–16 (AYSGGLDTT) lines the ATP pocket. Residue Tyr-86 participates in L-citrulline binding. Position 116 (Gly-116) interacts with ATP. L-aspartate-binding residues include Thr-118, Asn-122, and Asp-123. Asn-122 provides a ligand contact to L-citrulline. Residues Arg-126, Ser-177, Ser-186, Glu-263, and Tyr-275 each coordinate L-citrulline.

It belongs to the argininosuccinate synthase family. Type 1 subfamily. In terms of assembly, homotetramer.

The protein resides in the cytoplasm. It catalyses the reaction L-citrulline + L-aspartate + ATP = 2-(N(omega)-L-arginino)succinate + AMP + diphosphate + H(+). The protein operates within amino-acid biosynthesis; L-arginine biosynthesis; L-arginine from L-ornithine and carbamoyl phosphate: step 2/3. In Agathobacter rectalis (strain ATCC 33656 / DSM 3377 / JCM 17463 / KCTC 5835 / VPI 0990) (Eubacterium rectale), this protein is Argininosuccinate synthase.